Reading from the N-terminus, the 7067-residue chain is Replicase polyprotein 1ab (7067 aa).

Residues 12–127 (THVQLSLPVL…YRNVLLRKNG (116 aa)) form the CoV Nsp1 globular domain. Positions 148 to 179 (ELGTDPIEDYEQNWNTKHGSGALRELTRELNG) constitute a BetaCoV Nsp1 C-terminal domain. Residues 183–456 (TRYVDNNFCG…NEDLLEILNR (274 aa)) form the CoV Nsp2 N-terminal domain. Zn(2+) is bound by residues C200, C231, H234, H236, C323, C326, C341, C344, C370, C373, H382, and C416. Positions 200–236 (CIKDFLARAGKSMCTLSEQLDYIESKRGVYCCREHEH) are C2H2. The segment at 323-344 (CNHCDEVSWQTCDFLKATCEQC) is C4. A C2HC region spans residues 370–416 (CPACQDPEVGPEHSVADYHNHSNIETRLRKGGRTKCFGGCVFSYVGC). In terms of domain architecture, CoV Nsp2 middle spans 458–688 (RVNINIVGDF…LGVVNKALEM (231 aa)). The 129-residue stretch at 690–818 (LDQVTIAGTK…TNNVFRLKGG (129 aa)) folds into the CoV Nsp2 C-terminal domain. The region spanning 822-930 (KGVTFGEDTV…MYCSFYPPDE (109 aa)) is the Ubiquitin-like 1 domain. Macro domains are found at residues 998-1164 (VNQF…LDYL), 1201-1329 (KIKA…LPSE), and 1337-1464 (VLGT…TSSS). The region spanning 1466–1532 (TPEEYFVETT…PLDKLKSLLS (67 aa)) is the DPUP domain. Positions 1536–1591 (VKTIKVFTTVDNTNLHTHIVDMSMTYGQQFGPTYLDGADVTKIKPHVNHEGKTFFV) constitute a Ubiquitin-like 2 domain. One can recognise a Peptidase C16 domain in the interval 1605-1869 (YYHTIDESFL…YTEIEPKLDG (265 aa)). The For PL-PRO activity role is filled by C1645. Residues C1723, C1726, C1758, and C1760 each contribute to the Zn(2+) site. The C4-type zinc finger occupies 1723–1760 (CKHCGQKTTTLKGVEAVMYMGTLSYDELKTGVSIPCVC). Residues H1806 and D1820 each act as for PL-PRO activity in the active site. A Nucleic acid-binding domain is found at 1882–1992 (PIDLVPTQPM…CLWSTKPVDT (111 aa)). Positions 2017 to 2126 (TTSEEVVENP…LGQTAVITSN (110 aa)) constitute a G2M domain. Residues 2086 to 2365 (LALGLKTLAT…IFFASFYYVW (280 aa)) form an HD1 region. The helical transmembrane segment at 2197–2217 (LFTIVMWLLLLSICLGSLTYV) threads the bilayer. Residues 2218-2288 (TAVLGVCLSS…QVTISSYKLD (71 aa)) enclose the 3Ecto domain. 2 disulfide bridges follow: C2234–C2262 and C2253–C2259. 2 helical membrane-spanning segments follow: residues 2298–2318 (WLLA…SAIM) and 2345–2365 (MAPV…YYVW). A Y1 region spans residues 2366–2456 (KSYVHIMDGC…QFKRPINPTD (91 aa)). Residues 2366–2734 (KSYVHIMDGC…ITTKISLKGG (369 aa)) form the CoV Nsp3 Y domain. Residues H2370, C2375, C2380, C2383, C2416, H2419, C2423, and C2426 each contribute to the Zn(2+) site. The tract at residues 2370–2383 (HIMDGCTSSTCMMC) is ZF1. The ZF2 stretch occupies residues 2416–2426 (CKAHNWNCLNC). The interval 2457 to 2551 (QSAYVVDSVT…LLDQALVSDV (95 aa)) is Y2. A coV-Y region spans residues 2457–2734 (QSAYVVDSVT…ITTKISLKGG (278 aa)). The tract at residues 2552–2633 (GDSTEVSVKM…ECLKLSHHSD (82 aa)) is Y3. The tract at residues 2634 to 2734 (IEVTGDSCNN…ITTKISLKGG (101 aa)) is Y4. 7 consecutive transmembrane segments (helical) span residues 2744–2764 (LLKV…IMPV), 2986–3006 (PGVF…TPLV), 3016–3036 (ASVV…YYFM), 3048–3068 (VVAA…LAPA), 3071–3091 (FLPG…TNDV), 3099–3119 (WFAM…VFCI), and 3136–3156 (VMFN…TFLL). Residues 2749–3156 (LLCVLAALFC…EEAALCTFLL (408 aa)) form an HD2 region. The 99-residue stretch at 3136–3234 (VMFNGVTFST…QTSITSAVLQ (99 aa)) folds into the Nsp4C domain. The region spanning 3235–3540 (SGFRKMAFPS…VRQCSGVTFQ (306 aa)) is the Peptidase C30 domain. Catalysis depends on for 3CL-PRO activity residues H3275 and C3379. 7 helical membrane-spanning segments follow: residues 3558–3578 (FLTS…FFVY), 3580–3600 (NAFL…MLLV), 3606–3626 (FLCL…MVYM), 3652–3672 (DCVM…RTVY), 3679–3698 (VWTL…GNSL), 3722–3742 (IMFL…LLFI), and 3750–3770 (IMLV…LFCL). An HD3 region spans residues 3558–3770 (FLTSLLILVQ…CCCYFGLFCL (213 aa)). One can recognise a RdRp Nsp7 cofactor domain in the interval 3831 to 3913 (SKMSDVKCTS…EMLDNRATLQ (83 aa)). The RdRp Nsp8 cofactor domain occupies 3914-4111 (AIASEFSSLP…LRANSAVKLQ (198 aa)). Residues 4112 to 4224 (NNELSPVALR…GSLAATVRLQ (113 aa)) enclose the Nsp9 ssRNA-binding domain. Residues 4225-4363 (AGNATEVPAN…CDQLREPMMQ (139 aa)) form the ExoN/MTase coactivator domain. Zn(2+)-binding residues include C4298, C4301, H4307, C4314, C4341, C4344, C4352, and C4354. Zinc fingers lie at residues 4298 to 4314 (CLYC…KGFC) and 4341 to 4354 (CTVC…GCSC). Positions 4370–4624 (FLNRVCGVSA…AAESHMDADL (255 aa)) constitute a NiRAN domain. Residues N4572 and D4581 each coordinate Mn(2+). The Nsp12 Interface domain maps to 4629–4727 (VKWDLLKYDF…HNQDVNLHSS (99 aa)). H4658, C4664, C4669, C4673, and C4850 together coordinate Zn(2+). The Nsp12 RNA-dependent RNA polymerase domain maps to 4728–5295 (RLSFKELLVY…AMYTPHTVLQ (568 aa)). Residues 4730 to 4944 (SFKELLVYAA…HQKLLKSIAA (215 aa)) are rdRp Fingers N-ter. The tract at residues 4945-4983 (TRGATVVIGTSKFYGGWHNMLKTVYSDVESPHLMGWDYP) is rdRp Palm N-ter. Residues 4975–5137 (PHLMGWDYPK…CYNSNYAAQG (163 aa)) enclose the RdRp catalytic domain. Positions 4984–5042 (KCDRAMPNMLRIMASLILARKHSTCCNLSHRFYRLANECAQVLSEMVMCGGSLYVKPGG) are rdRp Fingers C-ter. Zn(2+) contacts are provided by H5005, C5008, and C5009. Residues 5043–5178 (TSSGDATTAY…TRGPHEFCSQ (136 aa)) form a rdRp Palm C-ter region. Residues S5122, D5123, and D5124 contribute to the active site. The tract at residues 5179–5295 (HTMLVKQGDD…AMYTPHTVLQ (117 aa)) is rdRp Thumb. The 113-residue stretch at 5296–5408 (AVGACVLCNS…TDFNAIATCD (113 aa)) folds into the CV ZBD domain. C5300, C5303, C5311, C5314, C5321, C5324, H5328, H5334, C5345, C5350, C5367, and H5370 together coordinate Zn(2+). The (+)RNA virus helicase ATP-binding domain occupies 5552–5733 (NISNEFSSNV…MKTIGPDMFL (182 aa)). 5577–5584 (GPPGTGKS) is a binding site for ATP. In terms of domain architecture, (+)RNA virus helicase C-terminal spans 5734–5903 (GTCRRCPAEI…TLQAENVTGL (170 aa)). The region spanning 5968-6183 (MFITREEAIR…RCLAVHECFV (216 aa)) is the ExoN domain. Catalysis depends on residues D5986, E5988, and E6087. Residues C6103, C6106, C6122, H6125, H6153, C6157, and H6160 each coordinate Zn(2+). Residues H6164 and D6169 contribute to the active site. C6175 contributes to the Zn(2+) binding site. The N7-MTase domain maps to 6192–6423 (YPIIGDELKI…NLWNTFTKLQ (232 aa)). S-adenosyl-L-methionine is bound at residue 6227–6233 (DIGNPKA). The interval 6310 to 6324 (CDGGSLYVNKHAFHT) is gpppA-binding. 4 residues coordinate Zn(2+): C6348, C6369, C6380, and H6383. The 61-residue stretch at 6424 to 6484 (SLENVAYNVV…NVAFELWAKR (61 aa)) folds into the Nsp15 N-terminal oligomerization domain. Residues 6485 to 6610 (NIKPVPEIKI…YFKKVDGIIQ (126 aa)) form the AV-Nsp11N/CoV-Nsp15M domain. Residues 6627–6766 (KPRSQMETDF…KDGHVETFYP (140 aa)) enclose the NendoU domain. Residues H6657, H6672, K6712, K6815, D6899, K6939, and E6972 contribute to the active site. A Nidovirus-type SAM-dependent 2'-O-MTase domain is found at 6771–7065 (SQAWQPGVAM…RVVVSSDILV (295 aa)).

It belongs to the coronaviruses polyprotein 1ab family. As to quaternary structure, interacts with host PHB and PHB2. In terms of assembly, interacts with papain-like protease nsp3 and non-structural protein 6. Monomer. Homodimer. Only the homodimer shows catalytic activity. As to quaternary structure, interacts with nsp8 and nsp12 to form the replication-transcription complex (RTC): nsp12, nsp7, two subunits of nsp8, and up to two subunits of nsp13. In terms of assembly, interacts with nsp7, nsp13 and nsp12 to form the replication-transcription complex (RTC): nsp12, nsp7, two subunits of nsp8, and up to two subunits of nsp13. Interacts with nsp12. As to quaternary structure, interacts with proofreading exoribonuclease nsp14 and 2'-O-methyltransferase nsp16; these interactions enhance nsp14 and nsp16 enzymatic activities. In terms of assembly, interacts with nsp7 and nsp8 to form the replication-transcription complex (RTC): nsp12, nsp7, two subunits of nsp8, and up to two subunits of nsp13. Interacts with nsp9. Interacts with nsp8 to form the replication-transcription complex (RTC): nsp12, nsp7, two subunits of nsp8, and up to two subunits of nsp13. Mn(2+) is required as a cofactor. Mg(2+) serves as cofactor. In terms of processing, specific enzymatic cleavages in vivo by its own proteases yield mature proteins. 3CL-PRO and PL-PRO proteinases are autocatalytically processed.

It is found in the host membrane. It localises to the host cytoplasm. The protein resides in the host perinuclear region. Its subcellular location is the host endoplasmic reticulum-Golgi intermediate compartment. The enzyme catalyses RNA(n) + a ribonucleoside 5'-triphosphate = RNA(n+1) + diphosphate. It carries out the reaction ATP + H2O = ADP + phosphate + H(+). The catalysed reaction is Thiol-dependent hydrolysis of ester, thioester, amide, peptide and isopeptide bonds formed by the C-terminal Gly of ubiquitin (a 76-residue protein attached to proteins as an intracellular targeting signal).. It catalyses the reaction a 5'-end (N(7)-methyl 5'-triphosphoguanosine)-ribonucleoside in mRNA + S-adenosyl-L-methionine = a 5'-end (N(7)-methyl 5'-triphosphoguanosine)-(2'-O-methyl-ribonucleoside) in mRNA + S-adenosyl-L-homocysteine + H(+). The enzyme catalyses uridylyl-uridylyl-ribonucleotide-RNA = a 3'-end uridylyl-2',3'-cyclophospho-uridine-RNA + a 5'-end dephospho-ribonucleoside-RNA. It carries out the reaction a 5'-end diphospho-ribonucleoside in mRNA + GTP + H(+) = a 5'-end (5'-triphosphoguanosine)-ribonucleoside in mRNA + diphosphate. The catalysed reaction is a 5'-end (5'-triphosphoguanosine)-ribonucleoside in mRNA + S-adenosyl-L-methionine = a 5'-end (N(7)-methyl 5'-triphosphoguanosine)-ribonucleoside in mRNA + S-adenosyl-L-homocysteine. The replicase polyprotein of coronaviruses is a multifunctional protein: it contains the activities necessary for the transcription of negative stranded RNA, leader RNA, subgenomic mRNAs and progeny virion RNA as well as proteinases responsible for the cleavage of the polyprotein into functional products. Functionally, inhibits host translation by interacting with the 40S ribosomal subunit. The nsp1-40S ribosome complex further induces an endonucleolytic cleavage near the 5'UTR of host mRNAs, targeting them for degradation. Viral mRNAs are not susceptible to nsp1-mediated endonucleolytic RNA cleavage thanks to the presence of a 5'-end leader sequence and are therefore protected from degradation. By suppressing host gene expression, nsp1 facilitates efficient viral gene expression in infected cells and evasion from host immune response. In terms of biological role, may play a role in the modulation of host cell survival signaling pathway by interacting with host PHB and PHB2. Indeed, these two proteins play a role in maintaining the functional integrity of the mitochondria and protecting cells from various stresses. Its function is as follows. Responsible for the cleavages located at the N-terminus of the replicase polyprotein. In addition, PL-PRO possesses a deubiquitinating/deISGylating activity and processes both 'Lys-48'- and 'Lys-63'-linked polyubiquitin chains from cellular substrates. Participates together with nsp4 in the assembly of virally-induced cytoplasmic double-membrane vesicles necessary for viral replication. Antagonizes innate immune induction of type I interferon by blocking the phosphorylation, dimerization and subsequent nuclear translocation of host IRF3. Also prevents host NF-kappa-B signaling. Participates in the assembly of virally-induced cytoplasmic double-membrane vesicles necessary for viral replication. Functionally, cleaves the C-terminus of replicase polyprotein at 11 sites. Recognizes substrates containing the core sequence [ILMVF]-Q-|-[SGACN]. Also able to bind an ADP-ribose-1''-phosphate (ADRP). In terms of biological role, plays a role in the initial induction of autophagosomes from host endoplasmic reticulum. Later, limits the expansion of these phagosomes that are no longer able to deliver viral components to lysosomes. Its function is as follows. Forms a hexadecamer with nsp8 (8 subunits of each) that may participate in viral replication by acting as a primase. Alternatively, may synthesize substantially longer products than oligonucleotide primers. Forms a hexadecamer with nsp7 (8 subunits of each) that may participate in viral replication by acting as a primase. Alternatively, may synthesize substantially longer products than oligonucleotide primers. Functionally, forms a primer, NSP9-pU, which is utilized by the polymerase for the initiation of RNA chains. Interacts with ribosome signal recognition particle RNA (SRP). Together with NSP8, suppress protein integration into the cell membrane, thereby disrupting host immune defenses. In terms of biological role, plays a pivotal role in viral transcription by stimulating both nsp14 3'-5' exoribonuclease and nsp16 2'-O-methyltransferase activities. Therefore plays an essential role in viral mRNAs cap methylation. Its function is as follows. RNA-directed RNA polymerase that catalyzes the transcription of viral genomic and subgenomic RNAs. Acts in complex with nsp7 and nsp8 to transcribe both the minus and positive strands of genomic RNA. The kinase-like NiRAN domain of NSP12 attaches one or more nucleotides to the amino terminus of NSP9, forming a covalent RNA-protein intermediate that serves as transcription/replication primer. Subgenomic RNAs (sgRNAs) are formed by discontinuous transcription: The polymerase has the ability to pause at transcription-regulating sequences (TRS) and jump to the leader TRS, resulting in a major deletion. This creates a series of subgenomic RNAs that are replicated, transcribed and translated. In addition, Nsp12 is a subunit of the viral RNA capping enzyme that catalyzes the RNA guanylyltransferase reaction for genomic and sub-genomic RNAs. Subsequently, the NiRAN domain transfers RNA to GDP, and forms the core cap structure GpppA-RNA. Multi-functional protein with a zinc-binding domain in N-terminus displaying RNA and DNA duplex-unwinding activities with 5' to 3' polarity. Activity of helicase is dependent on magnesium. Functionally, plays a role in viral RNA synthesis through two distinct activities. The N7-guanine methyltransferase activity plays a role in the formation of the cap structure GpppA-RNA. The proofreading exoribonuclease reduces the sensitivity of the virus to RNA mutagens during replication. This activity acts on both ssRNA and dsRNA in a 3'-5' direction. In terms of biological role, plays a role in viral transcription/replication and prevents the simultaneous activation of host cell dsRNA sensors, such as MDA5/IFIH1, OAS, and PKR. Acts by degrading the 5'-polyuridines generated during replication of the poly(A) region of viral genomic and subgenomic RNAs. Catalyzes a two-step reaction in which a 2'3'-cyclic phosphate (2'3'-cP) is first generated by 2'-O transesterification, which is then hydrolyzed to a 3'-phosphate (3'-P). If not degraded, poly(U) RNA would hybridize with poly(A) RNA tails and activate host dsRNA sensors. Its function is as follows. Methyltransferase that mediates mRNA cap 2'-O-ribose methylation to the 5'-cap structure of viral mRNAs. N7-methyl guanosine cap is a prerequisite for binding of nsp16. Therefore plays an essential role in viral mRNAs cap methylation which is essential to evade immune system. This chain is Replicase polyprotein 1ab (rep), found in Bat coronavirus HKU3 (BtCoV).